A 317-amino-acid polypeptide reads, in one-letter code: Transaldolase (317 aa).

Catalysis depends on lysine 126, which acts as the Schiff-base intermediate with substrate.

It belongs to the transaldolase family. Type 1 subfamily. As to quaternary structure, homodimer.

The protein localises to the cytoplasm. The catalysed reaction is D-sedoheptulose 7-phosphate + D-glyceraldehyde 3-phosphate = D-erythrose 4-phosphate + beta-D-fructose 6-phosphate. The protein operates within carbohydrate degradation; pentose phosphate pathway; D-glyceraldehyde 3-phosphate and beta-D-fructose 6-phosphate from D-ribose 5-phosphate and D-xylulose 5-phosphate (non-oxidative stage): step 2/3. Its function is as follows. Transaldolase is important for the balance of metabolites in the pentose-phosphate pathway. This chain is Transaldolase, found in Burkholderia pseudomallei (strain 1710b).